Here is a 333-residue protein sequence, read N- to C-terminus: Ribose-phosphate pyrophosphokinase (333 aa).

Position 58–60 (58–60 (DGE)) interacts with ATP. Residues H151 and D190 each contribute to the Mg(2+) site. K214 is a catalytic residue. Residues R216, D240, and 244 to 248 (DTAGT) each bind D-ribose 5-phosphate.

The protein belongs to the ribose-phosphate pyrophosphokinase family. Class I subfamily. As to quaternary structure, homohexamer. Requires Mg(2+) as cofactor.

The protein resides in the cytoplasm. The catalysed reaction is D-ribose 5-phosphate + ATP = 5-phospho-alpha-D-ribose 1-diphosphate + AMP + H(+). It participates in metabolic intermediate biosynthesis; 5-phospho-alpha-D-ribose 1-diphosphate biosynthesis; 5-phospho-alpha-D-ribose 1-diphosphate from D-ribose 5-phosphate (route I): step 1/1. In terms of biological role, involved in the biosynthesis of the central metabolite phospho-alpha-D-ribosyl-1-pyrophosphate (PRPP) via the transfer of pyrophosphoryl group from ATP to 1-hydroxyl of ribose-5-phosphate (Rib-5-P). This is Ribose-phosphate pyrophosphokinase from Synechocystis sp. (strain ATCC 27184 / PCC 6803 / Kazusa).